A 353-amino-acid chain; its full sequence is Photosystem II D2 protein (353 aa).

Position 2 is an N-acetylthreonine (Thr2). At Thr2 the chain carries Phosphothreonine. Residues 41–61 (CAYFAVGGWFTGTTFVTSWYT) traverse the membrane as a helical segment. His118 is a binding site for chlorophyll a. Residues 125-141 (GFMLRQFELARSVQLRP) traverse the membrane as a helical segment. Positions 130 and 143 each coordinate pheophytin a. The chain crosses the membrane as a helical span at residues 153–166 (VFVSVFLIYPLGQS). Position 198 (His198) interacts with chlorophyll a. Residues 208 to 228 (AALLCAIHGATVENTLFEDGD) form a helical membrane-spanning segment. Residues His215 and Phe262 each coordinate a plastoquinone. His215 contacts Fe cation. His269 contributes to the Fe cation binding site. The chain crosses the membrane as a helical span at residues 279-295 (GLWMSALGVVGLALNLR).

The protein belongs to the reaction center PufL/M/PsbA/D family. As to quaternary structure, PSII is composed of 1 copy each of membrane proteins PsbA, PsbB, PsbC, PsbD, PsbE, PsbF, PsbH, PsbI, PsbJ, PsbK, PsbL, PsbM, PsbT, PsbX, PsbY, PsbZ, Psb30/Ycf12, at least 3 peripheral proteins of the oxygen-evolving complex and a large number of cofactors. It forms dimeric complexes. The D1/D2 heterodimer binds P680, chlorophylls that are the primary electron donor of PSII, and subsequent electron acceptors. It shares a non-heme iron and each subunit binds pheophytin, quinone, additional chlorophylls, carotenoids and lipids. There is also a Cl(-1) ion associated with D1 and D2, which is required for oxygen evolution. The PSII complex binds additional chlorophylls, carotenoids and specific lipids. serves as cofactor.

It is found in the plastid. The protein localises to the chloroplast thylakoid membrane. The catalysed reaction is 2 a plastoquinone + 4 hnu + 2 H2O = 2 a plastoquinol + O2. Its function is as follows. Photosystem II (PSII) is a light-driven water:plastoquinone oxidoreductase that uses light energy to abstract electrons from H(2)O, generating O(2) and a proton gradient subsequently used for ATP formation. It consists of a core antenna complex that captures photons, and an electron transfer chain that converts photonic excitation into a charge separation. The D1/D2 (PsbA/PsbD) reaction center heterodimer binds P680, the primary electron donor of PSII as well as several subsequent electron acceptors. D2 is needed for assembly of a stable PSII complex. The chain is Photosystem II D2 protein from Guizotia abyssinica (Niger).